Consider the following 488-residue polypeptide: ATP-dependent RNA helicase dbp3 (488 aa).

Positions 1 to 29 (MAKREHQDQTGDSRPSKKSKGTKDTKKNT) are enriched in basic and acidic residues. The interval 1–42 (MAKREHQDQTGDSRPSKKSKGTKDTKKNTEVSPPYFQSPALD) is disordered. The short motif at 92 to 100 (GFASPTAIQ) is the Q motif element. Residues 104-279 (WPLLFAGRDV…STFMTSPVTV (176 aa)) form the Helicase ATP-binding domain. An ATP-binding site is contributed by 117–124 (AETGSGKT). The short motif at 226 to 229 (DEAD) is the DEAD box element. A Helicase C-terminal domain is found at 306 to 457 (EKEQRLVQIL…EVPEALLKFG (152 aa)).

This sequence belongs to the DEAD box helicase family. DDX5/DBP2 subfamily.

The protein resides in the nucleus. It is found in the nucleolus. The enzyme catalyses ATP + H2O = ADP + phosphate + H(+). Its function is as follows. ATP-dependent RNA helicase required for 60S ribosomal subunit synthesis. Involved in efficient pre-rRNA processing, predominantly at site A3, which is necessary for the normal formation of 25S and 5.8S rRNAs. The chain is ATP-dependent RNA helicase dbp3 (dbp3) from Emericella nidulans (strain FGSC A4 / ATCC 38163 / CBS 112.46 / NRRL 194 / M139) (Aspergillus nidulans).